Reading from the N-terminus, the 65-residue chain is Lantibiotic lacticin 3147 A2 (65 aa).

Positions 1 to 36 (MKEKNMKKNDTIELQLGKYLEDDMIELAEGDESHGG) are excised as a propeptide. A 2-oxobutanoic acid modification is found at Thr-37. 2,3-didehydrobutyrine is present on residues Thr-38 and Thr-41. 2 positions are modified to 2,3-didehydroalanine (Ser): Ser-45 and Ser-48. The segment at residues 52–56 (STNTC) is a cross-link (lanthionine (Ser-Cys)). 2 consecutive cross-links (beta-methyllanthionine (Thr-Cys)) follow at residues 58 to 61 (TTKC) and 62 to 65 (TRAC).

Maturation of lantibiotics involves the enzymatic conversion of Thr, and Ser into dehydrated AA and the formation of thioether bonds with cysteine. This is followed by membrane translocation and cleavage of the modified precursor. In terms of processing, it is not established whether the 2,3-didehydrobutyrines are the E- or Z-isomers. In the NMR model they were assumed to be the Z-isomer.

It localises to the secreted. Lanthionine-containing peptide antibiotic (lantibiotic) active on Gram-positive bacteria. The bactericidal activity of lantibiotics is based on depolarization of energized bacterial cytoplasmic membranes, initiated by the formation of aqueous transmembrane pores. When present individually lacticin 3147 A2 exhibits weak activity towards L.lactis strain AM2 and L.lactis strain HP, and no activity towards L.lactis strain IFPL359, but when combined with lacticin 3147 A1 it displays strong activity towards all three strains. The protein is Lantibiotic lacticin 3147 A2 of Lactococcus lactis subsp. lactis (Streptococcus lactis).